We begin with the raw amino-acid sequence, 425 residues long: Glutamyl-tRNA reductase (425 aa).

Residues 49-52 (TCNR), Ser-107, 112-114 (EPQ), and Gln-118 contribute to the substrate site. The active-site Nucleophile is the Cys-50. 187 to 192 (GAGETI) is an NADP(+) binding site.

Belongs to the glutamyl-tRNA reductase family. Homodimer.

It catalyses the reaction (S)-4-amino-5-oxopentanoate + tRNA(Glu) + NADP(+) = L-glutamyl-tRNA(Glu) + NADPH + H(+). It functions in the pathway porphyrin-containing compound metabolism; protoporphyrin-IX biosynthesis; 5-aminolevulinate from L-glutamyl-tRNA(Glu): step 1/2. Functionally, catalyzes the NADPH-dependent reduction of glutamyl-tRNA(Glu) to glutamate 1-semialdehyde (GSA). This chain is Glutamyl-tRNA reductase, found in Pseudomonas syringae pv. syringae (strain B728a).